We begin with the raw amino-acid sequence, 211 residues long: Protein-L-isoaspartate O-methyltransferase (211 aa).

Ser62 is a catalytic residue.

It belongs to the methyltransferase superfamily. L-isoaspartyl/D-aspartyl protein methyltransferase family.

It is found in the cytoplasm. It catalyses the reaction [protein]-L-isoaspartate + S-adenosyl-L-methionine = [protein]-L-isoaspartate alpha-methyl ester + S-adenosyl-L-homocysteine. Its function is as follows. Catalyzes the methyl esterification of L-isoaspartyl residues in peptides and proteins that result from spontaneous decomposition of normal L-aspartyl and L-asparaginyl residues. It plays a role in the repair and/or degradation of damaged proteins. The polypeptide is Protein-L-isoaspartate O-methyltransferase (Shewanella loihica (strain ATCC BAA-1088 / PV-4)).